Reading from the N-terminus, the 519-residue chain is SMR domain-containing protein At5g58720 (519 aa).

Basic residues predominate over residues 1–15 (MKQKNQHKKKKKRSC). 2 disordered regions span residues 1–47 (MKQK…REIE) and 92–128 (ESGDDPSTSSVASGSSGQETASTSEYGAGSSSSCSED). Over residues 28 to 47 (GNKKDVEEERKDGEGKREIE) the composition is skewed to basic and acidic residues. Residues 98–127 (STSSVASGSSGQETASTSEYGAGSSSSCSE) show a composition bias toward low complexity. Positions 428-502 (IDLHGQHVKP…NRGTLLIKLD (75 aa)) constitute a Smr domain.

As to quaternary structure, interacts with PRL1.

The chain is SMR domain-containing protein At5g58720 from Arabidopsis thaliana (Mouse-ear cress).